Here is a 153-residue protein sequence, read N- to C-terminus: Cytochrome c-type biogenesis protein CcmE (153 aa).

Residues 1-8 (MATRRGRR) are Cytoplasmic-facing. Residues 9–29 (ALLIAGGVGLLALAAALVLNA) traverse the membrane as a helical; Signal-anchor for type II membrane protein segment. Residues 30–153 (LRSNLVFFFS…PSATLQTEAR (124 aa)) are Periplasmic-facing. 2 residues coordinate heme: His-124 and Tyr-128.

The protein belongs to the CcmE/CycJ family.

Its subcellular location is the cell inner membrane. In terms of biological role, heme chaperone required for the biogenesis of c-type cytochromes. Transiently binds heme delivered by CcmC and transfers the heme to apo-cytochromes in a process facilitated by CcmF and CcmH. The chain is Cytochrome c-type biogenesis protein CcmE from Bordetella bronchiseptica (strain ATCC BAA-588 / NCTC 13252 / RB50) (Alcaligenes bronchisepticus).